The following is a 70-amino-acid chain: MSLIAAAIAIGLGALGAGIGNGLIVSRTVEGIARQPEAGKELRTLMFIGVALVEALPIIAVVIAFLAFFS.

The next 2 helical transmembrane spans lie at 4–24 and 45–65; these read IAAA…NGLI and LMFI…VIAF.

This sequence belongs to the ATPase C chain family. As to quaternary structure, F-type ATPases have 2 components, F(1) - the catalytic core - and F(0) - the membrane proton channel. F(1) has five subunits: alpha(3), beta(3), gamma(1), delta(1), epsilon(1). F(0) has three main subunits: a(1), b(2) and c(10-14). The alpha and beta chains form an alternating ring which encloses part of the gamma chain. F(1) is attached to F(0) by a central stalk formed by the gamma and epsilon chains, while a peripheral stalk is formed by the delta and b chains.

It is found in the cell membrane. Its function is as follows. F(1)F(0) ATP synthase produces ATP from ADP in the presence of a proton or sodium gradient. F-type ATPases consist of two structural domains, F(1) containing the extramembraneous catalytic core and F(0) containing the membrane proton channel, linked together by a central stalk and a peripheral stalk. During catalysis, ATP synthesis in the catalytic domain of F(1) is coupled via a rotary mechanism of the central stalk subunits to proton translocation. Functionally, key component of the F(0) channel; it plays a direct role in translocation across the membrane. A homomeric c-ring of between 10-14 subunits forms the central stalk rotor element with the F(1) delta and epsilon subunits. The chain is ATP synthase subunit c from Bacillus licheniformis (strain ATCC 14580 / DSM 13 / JCM 2505 / CCUG 7422 / NBRC 12200 / NCIMB 9375 / NCTC 10341 / NRRL NRS-1264 / Gibson 46).